The primary structure comprises 105 residues: Met repressor (105 aa).

It belongs to the MetJ family. In terms of assembly, homodimer.

Its subcellular location is the cytoplasm. In terms of biological role, this regulatory protein, when combined with SAM (S-adenosylmethionine) represses the expression of the methionine regulon and of enzymes involved in SAM synthesis. The sequence is that of Met repressor from Shigella boydii serotype 18 (strain CDC 3083-94 / BS512).